Consider the following 383-residue polypeptide: Succinyl-diaminopimelate desuccinylase (383 aa).

Position 79 (histidine 79) interacts with Zn(2+). Aspartate 81 is an active-site residue. Residue aspartate 110 participates in Zn(2+) binding. Glutamate 141 serves as the catalytic Proton acceptor. Zn(2+)-binding residues include glutamate 142, glutamate 170, and histidine 355.

This sequence belongs to the peptidase M20A family. DapE subfamily. In terms of assembly, homodimer. Zn(2+) serves as cofactor. It depends on Co(2+) as a cofactor.

It carries out the reaction N-succinyl-(2S,6S)-2,6-diaminopimelate + H2O = (2S,6S)-2,6-diaminopimelate + succinate. Its pathway is amino-acid biosynthesis; L-lysine biosynthesis via DAP pathway; LL-2,6-diaminopimelate from (S)-tetrahydrodipicolinate (succinylase route): step 3/3. In terms of biological role, catalyzes the hydrolysis of N-succinyl-L,L-diaminopimelic acid (SDAP), forming succinate and LL-2,6-diaminopimelate (DAP), an intermediate involved in the bacterial biosynthesis of lysine and meso-diaminopimelic acid, an essential component of bacterial cell walls. In Helicobacter pylori (strain P12), this protein is Succinyl-diaminopimelate desuccinylase.